A 517-amino-acid chain; its full sequence is MEWLIYIVILFVGIAAGAFFGISVGRKRAEEALEKKLKAAKEDAESIIKSAEKEASEIKKKAIIEAREEAHQIREEIEKERKKREEEIKQLEERLLKREEMLSKREELIDKRENYVENLKIELESKAKEIEEKAKEIERRFIELAGITHEQAREIVLQEAREKYEHEIAKFFVQIKTRYEDEADKYAKKIIADAIQRYAPEYIGEVTISTVALPNDDMKGRLIGREGRNIRTFEKITGVDLIIDDTPEMVTLSSFNPLRREVARRTIEKLVQDGRIHPARIEEMYEKAKAEVEREIKEAGQDAVITVGVGGLHPEIIKLLGRLKFRTSYGQNVLAHSVEVAQIAGLLAAELGLNVDKAKRGGLLHDIGKAIDHEVEGSHTDIGAEMLKRYGESDEIINMVMAHHGQEEPITPEAAIVAAADAISAARPGARREDVENYIKRLMKLEEIAKSYKYVENAYAIQAGREIRVIVQPDKTDDATIEKLAHDIATRIENELQYPGVLKVVVIREKRSVSYAK.

A helical membrane pass occupies residues 4 to 24; that stretch reads LIYIVILFVGIAAGAFFGISV. Residues 207 to 267 enclose the KH domain; that stretch reads TISTVALPND…LRREVARRTI (61 aa). An HD domain is found at 333–426; it reads VLAHSVEVAQ…VAAADAISAA (94 aa).

This sequence belongs to the RNase Y family.

It is found in the cell membrane. In terms of biological role, endoribonuclease that initiates mRNA decay. This is Ribonuclease Y from Fervidobacterium nodosum (strain ATCC 35602 / DSM 5306 / Rt17-B1).